Here is an 87-residue protein sequence, read N- to C-terminus: U14-lycotoxin-Ls1c (87 aa).

An N-terminal signal peptide occupies residues 1-20 (MNSKVFAVLLLLALLTCILS). The WAP domain occupies 21–66 (EKYCPTPRNTSCKKMNIKNNCCRDSDCTSNAFCCAEPCGNFCHKAS). 5 cysteine pairs are disulfide-bonded: Cys24-Cys54, Cys32-Cys58, Cys41-Cys53, Cys42-Cys80, and Cys47-Cys62.

Belongs to the venom protein 11 family. 01 (wap-1) subfamily. Post-translationally, contains 5 disulfide bonds. Expressed by the venom gland.

The protein localises to the secreted. Its function is as follows. Has antibacterial activity. The polypeptide is U14-lycotoxin-Ls1c (Lycosa singoriensis (Wolf spider)).